We begin with the raw amino-acid sequence, 109 residues long: Tyrosine-protein phosphatase 4 (109 aa).

The 109-residue stretch at 1 to 109 (SKSASIVMLT…QNSGNHPIVI (109 aa)) folds into the Tyrosine-protein phosphatase domain. Glutamate 78 is a binding site for substrate.

This sequence belongs to the protein-tyrosine phosphatase family.

It catalyses the reaction O-phospho-L-tyrosyl-[protein] + H2O = L-tyrosyl-[protein] + phosphate. This Styela plicata (Wrinkled sea squirt) protein is Tyrosine-protein phosphatase 4 (STY-4).